A 403-amino-acid chain; its full sequence is Phosphopentomutase (403 aa).

Mn(2+) contacts are provided by aspartate 13, aspartate 298, histidine 303, aspartate 339, histidine 340, and histidine 351.

It belongs to the phosphopentomutase family. The cofactor is Mn(2+).

Its subcellular location is the cytoplasm. The enzyme catalyses 2-deoxy-alpha-D-ribose 1-phosphate = 2-deoxy-D-ribose 5-phosphate. The catalysed reaction is alpha-D-ribose 1-phosphate = D-ribose 5-phosphate. It participates in carbohydrate degradation; 2-deoxy-D-ribose 1-phosphate degradation; D-glyceraldehyde 3-phosphate and acetaldehyde from 2-deoxy-alpha-D-ribose 1-phosphate: step 1/2. Functionally, isomerase that catalyzes the conversion of deoxy-ribose 1-phosphate (dRib-1-P) and ribose 1-phosphate (Rib-1-P) to deoxy-ribose 5-phosphate (dRib-5-P) and ribose 5-phosphate (Rib-5-P), respectively. In Streptococcus pneumoniae serotype 19F (strain G54), this protein is Phosphopentomutase.